A 421-amino-acid chain; its full sequence is MACARPLISVYSEKGESSGKNVTLPAVFKAPIRPDIVNFVHTNLRKNNRQPYAVSELAGHQTSAESWGTGRAVARIPRVRGGGTHRSGQGAFGNMCRGGRMFAPTKTWRRWHRRVNTTQKRYAICSALAASALPALVMSKGHCVEEVPELPLVVEDKVESYKKTKEAVQLLKKLKAWNDIKKVYASQRMRAGKGKMRNRRRIQRRGPCIIYNEDNGIIKAFRNIPGITLLNVSKLNILKLAPGGHVGRFCIWTESAFRKLDELYGTWRKAASLKSNYNLPMHKMMNTDLSRILKSPEIQRALRAPRKKIHRRVLKKNPLKNLRIMLKLNPYAKTMRRNTILRQARNHKLRVKKLEAAAAALAAKSEKIVPEKGAGDKKPAVGKKGKKPVDAKKLKKPAGKKVVTKKPAEKKPTTEEKKSAA.

Ala-2 is subject to N-acetylalanine. The residue at position 14 (Lys-14) is an N6-acetyllysine. At Arg-97 the chain carries Omega-N-methylarginine. Position 106 is an N6-acetyllysine (Lys-106). Lys-239 participates in a covalent cross-link: Glycyl lysine isopeptide (Lys-Gly) (interchain with G-Cter in SUMO2). The residue at position 259 (Lys-259) is an N6-acetyllysine. Residue Thr-266 is modified to Phosphothreonine. 2 positions are modified to phosphoserine: Ser-290 and Ser-295. At Arg-300 the chain carries Citrulline. A Glycyl lysine isopeptide (Lys-Gly) (interchain with G-Cter in SUMO2) cross-link involves residue Lys-327. N6-acetyllysine occurs at positions 333 and 353. An N6-acetyllysine; alternate modification is found at Lys-364. Residue Lys-364 forms a Glycyl lysine isopeptide (Lys-Gly) (interchain with G-Cter in SUMO1); alternate linkage. At Ser-365 the chain carries Phosphoserine. A compositionally biased stretch (basic and acidic residues) spans 365–379; the sequence is SEKIVPEKGAGDKKP. The tract at residues 365–421 is disordered; that stretch reads SEKIVPEKGAGDKKPAVGKKGKKPVDAKKLKKPAGKKVVTKKPAEKKPTTEEKKSAA. Basic residues predominate over residues 393–404; sequence KLKKPAGKKVVT. The segment covering 406-421 has biased composition (basic and acidic residues); the sequence is KPAEKKPTTEEKKSAA.

This sequence belongs to the universal ribosomal protein uL4 family. As to quaternary structure, component of the large ribosomal subunit. May bind IPO9 with low affinity. Interacts with RBM3. Citrullinated by PADI4.

It localises to the cytoplasm. In terms of biological role, component of the large ribosomal subunit. The ribosome is a large ribonucleoprotein complex responsible for the synthesis of proteins in the cell. This is Large ribosomal subunit protein uL4 (Rpl4) from Rattus norvegicus (Rat).